Consider the following 259-residue polypeptide: Probable metal transport system ATP-binding protein CPn_0348/CP_0412/CPj0348/CpB0355 (259 aa).

The ABC transporter domain maps to 3-241 (VKDETFWSVH…TIFQTYGCEI (239 aa)). 41 to 48 (GPNGAGKS) is an ATP binding site.

This sequence belongs to the ABC transporter superfamily.

It is found in the cell inner membrane. Its function is as follows. Part of an ATP-driven transport system CPn0346/CPn0347/CPn0348/CPn0349 for a metal. Probably responsible for energy coupling to the transport system. This chain is Probable metal transport system ATP-binding protein CPn_0348/CP_0412/CPj0348/CpB0355, found in Chlamydia pneumoniae (Chlamydophila pneumoniae).